The chain runs to 646 residues: Aquaglycerol porin AQY3 (646 aa).

Residues 1 to 14 are compositionally biased toward low complexity; it reads MSYESGRSSSSSES. 2 disordered regions span residues 1-68 and 175-262; these read MSYE…SRNK and KNMD…KKRT. Residues 1-350 are Cytoplasmic-facing; that stretch reads MSYESGRSSS…AKIRYHMREP (350 aa). The span at 19-41 shows a compositional bias: basic and acidic residues; the sequence is TLKEEPNGKIAWEESVKKSRENN. The span at 190-201 shows a compositional bias: polar residues; sequence TDISRGGSTTSV. The chain crosses the membrane as a helical span at residues 351–371; the sequence is FAEFLGTLVLVIFGVGGNLQA. Over 372–383 the chain is Extracellular; sequence TVTKGSGGSYES. Residues 384–404 form a helical membrane-spanning segment; the sequence is LSFAWGFGCMLGVYVAGGISG. Topologically, residues 405 to 427 are cytoplasmic; sequence GHINPAVTISMAIFRKFPWKKVP. The short motif at 408–410 is the NPA 1 element; that stretch reads NPA. The helical transmembrane segment at 428 to 448 threads the bilayer; that stretch reads VYIVAQIIGAYFGGAMAYGYF. Residues 449–481 are Extracellular-facing; the sequence is WSSITEFEGGPHIRTTATGACLFTDPKSYVTWR. The chain crosses the membrane as a helical span at residues 482–502; the sequence is NAFFDEFIGASILVGCLMALL. Over 503–509 the chain is Cytoplasmic; that stretch reads DDSNAPP. The chain crosses the membrane as a helical span at residues 510–530; it reads GNGMTALIIGFLVAAIGMALG. Topologically, residues 531 to 569 are extracellular; sequence YQTSFTINPARDLGPRIFASMIGYGPHAFHLTHWWWTWG. An NPA 2 motif is present at residues 538 to 540; sequence NPA. Residues 570 to 590 traverse the membrane as a helical segment; that stretch reads AWGGPIAGGIAGALIYDIFIF. The Cytoplasmic portion of the chain corresponds to 591-646; that stretch reads TGCESPVNYPDNGYIENRVGKLLHAEFHQNDGTVSDESGVNSNSNTGSKKSVPTSS. The disordered stretch occupies residues 621–646; the sequence is DGTVSDESGVNSNSNTGSKKSVPTSS.

Belongs to the MIP/aquaporin (TC 1.A.8) family.

Its subcellular location is the cell membrane. It catalyses the reaction glycerol(in) = glycerol(out). Channel protein that mediates glycerol entry under ethanol stimulation. Does not seem to mediate glycerol uptake under standard conditions. The sequence is that of Aquaglycerol porin AQY3 from Saccharomyces cerevisiae (strain ATCC 204508 / S288c) (Baker's yeast).